Reading from the N-terminus, the 413-residue chain is Histidine--tRNA ligase (413 aa).

This sequence belongs to the class-II aminoacyl-tRNA synthetase family. Homodimer.

It is found in the cytoplasm. It carries out the reaction tRNA(His) + L-histidine + ATP = L-histidyl-tRNA(His) + AMP + diphosphate + H(+). The chain is Histidine--tRNA ligase from Ehrlichia chaffeensis (strain ATCC CRL-10679 / Arkansas).